We begin with the raw amino-acid sequence, 176 residues long: MTTTTEFPSATAKARFVRVSPRKARRVIDLVRGRSVSDALDILRWAPQAASEPVAKVIASAAANAQNNNGLDPATLIVATVYADEGPTAKRIRPRAQGRAFRIRKRTSHITVVVESRPSKDQRSSKSSRARRAEGSKAAATAPAKKSSASKAPAKKAATKAESKTSEISEAKGGSD.

A disordered region spans residues 113–176; sequence VVESRPSKDQ…EISEAKGGSD (64 aa). Low complexity predominate over residues 136–152; sequence SKAAATAPAKKSSASKA. Residues 159-176 show a composition bias toward basic and acidic residues; it reads TKAESKTSEISEAKGGSD.

It belongs to the universal ribosomal protein uL22 family. Part of the 50S ribosomal subunit.

Functionally, this protein binds specifically to 23S rRNA; its binding is stimulated by other ribosomal proteins, e.g. L4, L17, and L20. It is important during the early stages of 50S assembly. It makes multiple contacts with different domains of the 23S rRNA in the assembled 50S subunit and ribosome. Its function is as follows. The globular domain of the protein is located near the polypeptide exit tunnel on the outside of the subunit, while an extended beta-hairpin is found that lines the wall of the exit tunnel in the center of the 70S ribosome. This chain is Large ribosomal subunit protein uL22, found in Mycobacterium ulcerans (strain Agy99).